The primary structure comprises 89 residues: MSSNFTKALSLLSIEALISSTSSVTQHSVFFFKADFRFFVCFWSIWFWTGDISFSLLSMLVKSGPYNTVTSVSLFQLMDSGLDLEFCKP.

A helical membrane pass occupies residues 39–61; that stretch reads FVCFWSIWFWTGDISFSLLSMLV.

Its subcellular location is the membrane. This is an uncharacterized protein from Saccharomyces cerevisiae (strain ATCC 204508 / S288c) (Baker's yeast).